Here is a 154-residue protein sequence, read N- to C-terminus: Myoglobin (154 aa).

The Globin domain occupies 2 to 148 (GLSDGEWQLV…FRNEMAAQYK (147 aa)). S4 is modified (phosphoserine). H65 serves as a coordination point for nitrite. H65 lines the O2 pocket. T68 is subject to Phosphothreonine. A heme b-binding site is contributed by H94.

As to quaternary structure, monomeric.

Its subcellular location is the cytoplasm. It is found in the sarcoplasm. It carries out the reaction Fe(III)-heme b-[protein] + nitric oxide + H2O = Fe(II)-heme b-[protein] + nitrite + 2 H(+). It catalyses the reaction H2O2 + AH2 = A + 2 H2O. In terms of biological role, monomeric heme protein which primary function is to store oxygen and facilitate its diffusion within muscle tissues. Reversibly binds oxygen through a pentacoordinated heme iron and enables its timely and efficient release as needed during periods of heightened demand. Depending on the oxidative conditions of tissues and cells, and in addition to its ability to bind oxygen, it also has a nitrite reductase activity whereby it regulates the production of bioactive nitric oxide. Under stress conditions, like hypoxia and anoxia, it also protects cells against reactive oxygen species thanks to its pseudoperoxidase activity. This is Myoglobin from Bubalus bubalis (Domestic water buffalo).